The following is a 533-amino-acid chain: GMP synthase [glutamine-hydrolyzing] (533 aa).

In terms of domain architecture, Glutamine amidotransferase type-1 spans 25–215 (SIVIFDFGSQ…VFNICKCHAN (191 aa)). The Nucleophile role is filled by Cys102. Active-site residues include His189 and Glu191. Residues 216–408 (WTMGNYIQES…LGLPDEMIWR (193 aa)) enclose the GMPS ATP-PPase domain. 243-249 (SGGVDSA) provides a ligand contact to ATP.

As to quaternary structure, homodimer.

It carries out the reaction XMP + L-glutamine + ATP + H2O = GMP + L-glutamate + AMP + diphosphate + 2 H(+). The protein operates within purine metabolism; GMP biosynthesis; GMP from XMP (L-Gln route): step 1/1. Catalyzes the synthesis of GMP from XMP. The protein is GMP synthase [glutamine-hydrolyzing] of Dehalococcoides mccartyi (strain ATCC BAA-2266 / KCTC 15142 / 195) (Dehalococcoides ethenogenes (strain 195)).